We begin with the raw amino-acid sequence, 153 residues long: Aspartate carbamoyltransferase regulatory chain (153 aa).

Positions 109, 114, 138, and 141 each coordinate Zn(2+).

This sequence belongs to the PyrI family. As to quaternary structure, contains catalytic and regulatory chains. Zn(2+) is required as a cofactor.

Involved in allosteric regulation of aspartate carbamoyltransferase. The protein is Aspartate carbamoyltransferase regulatory chain of Salmonella arizonae (strain ATCC BAA-731 / CDC346-86 / RSK2980).